We begin with the raw amino-acid sequence, 486 residues long: Cardiolipin synthase A (486 aa).

A run of 2 helical transmembrane segments spans residues 3–23 and 38–58; these read TFYT…IAGV and MTWL…YFAF. PLD phosphodiesterase domains follow at residues 219-246 and 399-426; these read MDLR…VDPR and EDGL…DMRS. Catalysis depends on residues His224, Lys226, Asp231, His404, Lys406, and Asp411.

It belongs to the phospholipase D family. Cardiolipin synthase subfamily. ClsA sub-subfamily.

The protein localises to the cell inner membrane. The catalysed reaction is 2 a 1,2-diacyl-sn-glycero-3-phospho-(1'-sn-glycerol) = a cardiolipin + glycerol. Functionally, catalyzes the reversible phosphatidyl group transfer from one phosphatidylglycerol molecule to another to form cardiolipin (CL) (diphosphatidylglycerol) and glycerol. The protein is Cardiolipin synthase A of Proteus mirabilis (strain HI4320).